A 516-amino-acid chain; its full sequence is GMP synthase [glutamine-hydrolyzing] (516 aa).

Positions 8-198 (KILILDFGSQ…VVNICGCDTL (191 aa)) constitute a Glutamine amidotransferase type-1 domain. C84 (nucleophile) is an active-site residue. Active-site residues include H172 and E174. One can recognise a GMPS ATP-PPase domain in the interval 199–391 (WNIENIIEND…LGLPYNMLYR (193 aa)). 226 to 232 (SGGVDSS) serves as a coordination point for ATP.

As to quaternary structure, homodimer.

The enzyme catalyses XMP + L-glutamine + ATP + H2O = GMP + L-glutamate + AMP + diphosphate + 2 H(+). It functions in the pathway purine metabolism; GMP biosynthesis; GMP from XMP (L-Gln route): step 1/1. Functionally, catalyzes the synthesis of GMP from XMP. This chain is GMP synthase [glutamine-hydrolyzing], found in Francisella tularensis subsp. tularensis (strain FSC 198).